Consider the following 138-residue polypeptide: Putative pre-16S rRNA nuclease (138 aa).

The protein belongs to the YqgF nuclease family.

It localises to the cytoplasm. Functionally, could be a nuclease involved in processing of the 5'-end of pre-16S rRNA. The polypeptide is Putative pre-16S rRNA nuclease (Listeria monocytogenes serovar 1/2a (strain ATCC BAA-679 / EGD-e)).